We begin with the raw amino-acid sequence, 546 residues long: Sulfite oxidase, mitochondrial (546 aa).

The N-terminal 80 residues, 1–80, are a transit peptide targeting the mitochondrion; it reads MLPRLYRSVA…YHDHRCRASQ (80 aa). Residues 83–162 enclose the Cytochrome b5 heme-binding domain; that stretch reads PRIYSKEDVR…LAEYKIGELN (80 aa). His119 contributes to the heme b binding site. A Phosphoserine modification is found at Ser124. Residues His144, Gln146, and His148 each contribute to the heme b site. The interval 166–175 is hinge; the sequence is RMSPPLEASD. Residues 176 to 402 form a moco domain region; the sequence is PYSNDPMRHP…YSHWQRRDYK (227 aa). Residues 216-220, Cys265, Asp323, His362, Arg367, and 378-380 each bind Mo-molybdopterin; these read FTRNH and HVK. The interval 403-539 is homodimerization; sequence GFSPSVDWDT…RGVLSNAWHR (137 aa).

As to quaternary structure, homodimer. Heme b is required as a cofactor. Requires Mo-molybdopterin as cofactor.

The protein localises to the mitochondrion intermembrane space. The enzyme catalyses sulfite + O2 + H2O = sulfate + H2O2. It functions in the pathway energy metabolism; sulfur metabolism. Its function is as follows. Catalyzes the oxidation of sulfite to sulfate, the terminal reaction in the oxidative degradation of sulfur-containing amino acids. The polypeptide is Sulfite oxidase, mitochondrial (Rattus norvegicus (Rat)).